Reading from the N-terminus, the 151-residue chain is Cytochrome c oxidase subunit 5B, mitochondrial (151 aa).

A mitochondrion-targeting transit peptide spans 1-17 (MLRTSLTKGARLTGTRF). The Mitochondrial matrix segment spans residues 18–85 (VQTKALSKAT…EWGPRRPVHG (68 aa)). A helical membrane pass occupies residues 86 to 108 (KGDVAFITKGVFLGLGISFGLFG). At 109-151 (LVRLLANPETPKTMNREWQLKSDEYLKSKNANPWGGYSQVQSK) the chain is on the mitochondrial intermembrane side.

This sequence belongs to the cytochrome c oxidase IV family. Component of the cytochrome c oxidase (complex IV, CIV), a multisubunit enzyme composed of 12 subunits. The complex is composed of a catalytic core of 3 subunits COX1, COX2 and COX3, encoded in the mitochondrial DNA, and 9 supernumerary subunits COX4, COX5A (or COX5B), COX6, COX7, COX8, COX9, COX12, COX13 and COX26, which are encoded in the nuclear genome. COX5A is the predominant subunit V during aerobic/normoxic growth, it gets replaced by COX5B under anaerobic/hypoxic conditions. The complex exists as a monomer or a dimer and forms supercomplexes (SCs) in the inner mitochondrial membrane with a dimer of ubiquinol-cytochrome c oxidoreductase (cytochrome b-c1 complex, complex III, CIII), resulting in 2 different assemblies (supercomplexes III(2)IV and III(2)IV(2)).

The protein resides in the mitochondrion inner membrane. The protein operates within energy metabolism; oxidative phosphorylation. In terms of biological role, component of the cytochrome c oxidase, the last enzyme in the mitochondrial electron transport chain which drives oxidative phosphorylation. The respiratory chain contains 3 multisubunit complexes succinate dehydrogenase (complex II, CII), ubiquinol-cytochrome c oxidoreductase (cytochrome b-c1 complex, complex III, CIII) and cytochrome c oxidase (complex IV, CIV), that cooperate to transfer electrons derived from NADH and succinate to molecular oxygen, creating an electrochemical gradient over the inner membrane that drives transmembrane transport and the ATP synthase. Cytochrome c oxidase is the component of the respiratory chain that catalyzes the reduction of oxygen to water. Electrons originating from reduced cytochrome c in the intermembrane space (IMS) are transferred via the dinuclear copper A center (CU(A)) of COX2 and heme A of COX1 to the active site in COX1, a binuclear center (BNC) formed by heme A3 and copper B (CU(B)). The BNC reduces molecular oxygen to 2 water molecules using 4 electrons from cytochrome c in the IMS and 4 protons from the mitochondrial matrix. This Saccharomyces cerevisiae (strain ATCC 204508 / S288c) (Baker's yeast) protein is Cytochrome c oxidase subunit 5B, mitochondrial (COX5B).